A 127-amino-acid polypeptide reads, in one-letter code: Group 3 truncated hemoglobin ctb (127 aa).

Heme-binding residues include tyrosine 64 and histidine 72.

This sequence belongs to the truncated hemoglobin family. Group III subfamily. In terms of assembly, monomer. It depends on heme as a cofactor.

It localises to the cytoplasm. Functionally, has been suggested to be involved in cytochrome c peroxidase or P450-like oxygen chemistry or cyanide detoxification. The high oxygen affinity of this protein suggests that it probably does not function as an oxygen transporter. The chain is Group 3 truncated hemoglobin ctb (ctb) from Campylobacter jejuni subsp. jejuni serotype O:2 (strain ATCC 700819 / NCTC 11168).